Reading from the N-terminus, the 607-residue chain is Inactive metallocarboxypeptidase ECM14 (607 aa).

The N-terminal stretch at M1 to A21 is a signal peptide. Positions I22 to P174 are excised as a propeptide. The region spanning N202 to L522 is the Peptidase M14 domain. H264 and E267 together coordinate Zn(2+). Residues H264–E267, R322, and D339–R340 contribute to the substrate site. A disulfide bridge connects residues C333 and C356. A glycan (N-linked (GlcNAc...) asparagine) is linked at N349. H396 lines the Zn(2+) pocket. Residue S397–Y398 participates in substrate binding. Residues Q539–R607 are disordered. Positions N550–D571 are enriched in acidic residues. Residues G573–N590 are compositionally biased toward basic and acidic residues.

It belongs to the peptidase M14 family. Requires Zn(2+) as cofactor.

It localises to the vacuole. It is found in the secreted. Its function is as follows. Inactive carboxypeptidase that may play a role in cell wall organization and biogenesis. The chain is Inactive metallocarboxypeptidase ECM14 (ECM14) from Ajellomyces capsulatus (strain NAm1 / WU24) (Darling's disease fungus).